The chain runs to 114 residues: Fumarate reductase subunit D (114 aa).

3 consecutive transmembrane segments (helical) span residues 24–44, 50–70, and 92–112; these read VSAI…PFGL, LITF…TIFP, and GGFI…FAVI.

The protein belongs to the FrdD family. In terms of assembly, part of an enzyme complex containing four subunits: a flavoprotein (FrdA), an iron-sulfur protein (FrdB), and two hydrophobic anchor proteins (FrdC and FrdD).

The protein localises to the cell inner membrane. Its function is as follows. Anchors the catalytic components of the fumarate reductase complex to the cell membrane, binds quinones. This chain is Fumarate reductase subunit D, found in Haemophilus influenzae (strain ATCC 51907 / DSM 11121 / KW20 / Rd).